A 363-amino-acid polypeptide reads, in one-letter code: Alanine racemase (363 aa).

Residue lysine 34 is the Proton acceptor; specific for D-alanine of the active site. Lysine 34 is subject to N6-(pyridoxal phosphate)lysine. Arginine 129 is a substrate binding site. Catalysis depends on tyrosine 256, which acts as the Proton acceptor; specific for L-alanine. Methionine 304 contributes to the substrate binding site.

Belongs to the alanine racemase family. Requires pyridoxal 5'-phosphate as cofactor.

The catalysed reaction is L-alanine = D-alanine. It participates in amino-acid biosynthesis; D-alanine biosynthesis; D-alanine from L-alanine: step 1/1. Its function is as follows. Catalyzes the interconversion of L-alanine and D-alanine. May also act on other amino acids. In Edwardsiella ictaluri (strain 93-146), this protein is Alanine racemase (alr).